The chain runs to 96 residues: MLNMNLQLLASKKGVGSSKNGRDSISKRLGVKRFDGQLVTAGSIIVRQRGTKIHPGTNVGKGSDDTLFALVDGTVKFERKDKKRKKVSIYPVAIAE.

Positions 1–9 (MLNMNLQLL) are excised as a propeptide.

Belongs to the bacterial ribosomal protein bL27 family. The N-terminus is cleaved by ribosomal processing cysteine protease Prp.

This Clostridioides difficile (strain 630) (Peptoclostridium difficile) protein is Large ribosomal subunit protein bL27.